A 382-amino-acid chain; its full sequence is Histidinol-phosphate aminotransferase (382 aa).

K215 bears the N6-(pyridoxal phosphate)lysine mark. Positions 363 to 382 (NIDNQSKTHSQTSSIRKGTI) are disordered.

Belongs to the class-II pyridoxal-phosphate-dependent aminotransferase family. Histidinol-phosphate aminotransferase subfamily. Homodimer. Requires pyridoxal 5'-phosphate as cofactor.

The enzyme catalyses L-histidinol phosphate + 2-oxoglutarate = 3-(imidazol-4-yl)-2-oxopropyl phosphate + L-glutamate. It participates in amino-acid biosynthesis; L-histidine biosynthesis; L-histidine from 5-phospho-alpha-D-ribose 1-diphosphate: step 7/9. The protein is Histidinol-phosphate aminotransferase of Yersinia pseudotuberculosis serotype O:1b (strain IP 31758).